Here is a 368-residue protein sequence, read N- to C-terminus: Dual-specificity RNA methyltransferase RlmN (368 aa).

Glu94 (proton acceptor) is an active-site residue. The 235-residue stretch at 100–334 folds into the Radical SAM core domain; that stretch reads EEDRATLCVS…VIVRKTRGDD (235 aa). Cys107 and Cys339 are joined by a disulfide. [4Fe-4S] cluster contacts are provided by Cys114, Cys118, and Cys121. Residues 163 to 164, Ser195, 217 to 219, and Asn296 contribute to the S-adenosyl-L-methionine site; these read GE and SLH. The active-site S-methylcysteine intermediate is Cys339.

This sequence belongs to the radical SAM superfamily. RlmN family. [4Fe-4S] cluster serves as cofactor.

The protein localises to the cytoplasm. It carries out the reaction adenosine(2503) in 23S rRNA + 2 reduced [2Fe-2S]-[ferredoxin] + 2 S-adenosyl-L-methionine = 2-methyladenosine(2503) in 23S rRNA + 5'-deoxyadenosine + L-methionine + 2 oxidized [2Fe-2S]-[ferredoxin] + S-adenosyl-L-homocysteine. The enzyme catalyses adenosine(37) in tRNA + 2 reduced [2Fe-2S]-[ferredoxin] + 2 S-adenosyl-L-methionine = 2-methyladenosine(37) in tRNA + 5'-deoxyadenosine + L-methionine + 2 oxidized [2Fe-2S]-[ferredoxin] + S-adenosyl-L-homocysteine. In terms of biological role, specifically methylates position 2 of adenine 2503 in 23S rRNA and position 2 of adenine 37 in tRNAs. m2A2503 modification seems to play a crucial role in the proofreading step occurring at the peptidyl transferase center and thus would serve to optimize ribosomal fidelity. The polypeptide is Dual-specificity RNA methyltransferase RlmN (Aeromonas salmonicida (strain A449)).